We begin with the raw amino-acid sequence, 483 residues long: Cobyric acid synthase (483 aa).

Positions 251-438 constitute a GATase cobBQ-type domain; that stretch reads ALIVAVPMLP…LHGIFSADRF (188 aa). Cys-333 (nucleophile) is an active-site residue. The active site involves His-430.

This sequence belongs to the CobB/CobQ family. CobQ subfamily.

It participates in cofactor biosynthesis; adenosylcobalamin biosynthesis. In terms of biological role, catalyzes amidations at positions B, D, E, and G on adenosylcobyrinic A,C-diamide. NH(2) groups are provided by glutamine, and one molecule of ATP is hydrogenolyzed for each amidation. This chain is Cobyric acid synthase, found in Brucella abortus (strain S19).